We begin with the raw amino-acid sequence, 2021 residues long: Fanconi anemia group M protein homolog (2021 aa).

S30 carries the post-translational modification Phosphoserine. The 169-residue stretch at 86-254 (ISRSALFCNT…QVITNLLIGK (169 aa)) folds into the Helicase ATP-binding domain. 99 to 106 (LPTGLGKT) is an ATP binding site. The DEAH box signature appears at 202-205 (DEAH). One can recognise a Helicase C-terminal domain in the interval 437 to 612 (KLEEVILEHF…VLRLYQGSPR (176 aa)). 9 disordered regions span residues 638–657 (RSVQ…SKSN), 837–886 (PCRA…RMAD), 1002–1049 (CSPY…LPGT), 1244–1273 (GAAD…AISP), 1296–1319 (ASSS…SSKT), 1369–1441 (PRRT…RTCP), 1447–1466 (KGRN…RSQV), 1615–1700 (NKKQ…QPSI), and 1712–1732 (AQSH…ESRK). The span at 1018 to 1035 (ASHSAGNSQQNLESNSAK) shows a compositional bias: polar residues. Residues 1249 to 1259 (SGRHSDKEIKD) are compositionally biased toward basic and acidic residues. Basic and acidic residues predominate over residues 1370–1379 (RRTEVEHLTS). Basic residues predominate over residues 1388–1397 (RKTKKPKRNV). Position 1637 is a phosphoserine (S1637). Over residues 1669–1682 (SGPSGSSVPPQVLS) the composition is skewed to low complexity. The span at 1684–1700 (PSWNQSSRQRLQVQPSI) shows a compositional bias: polar residues. The interval 1689–2009 (SSRQRLQVQP…LNQERQKPDT (321 aa)) is interaction with FAAP24.

Belongs to the DEAD box helicase family. DEAH subfamily. FANCM sub-subfamily. In terms of assembly, component of the Fanconi anemia (FA) core complex, which consists of CENPS, CENPX, FANCA, FANCB, FANCC, FANCE, FANCF, FANCG, FANCL, FANCM, FAAP24 and FAAP100. The FA core complex associates with Bloom syndrome (BLM) complex, which consists of at least BLM, DNA topoisomerase 3-alpha/TOP3A, RMI1/BLAP75, RPA1/RPA70 and RPA2/RPA32. This supercomplex between FA and BLM complexes has been called BRAFT. Forms a discrete complex with CENPS and CENPX, called FANCM-MHF; this interaction stimulates DNA binding and replication fork remodeling by FANCM and stabilizes the binding partners. Forms a heterodimer with FAAP24; this interaction increases FANCM single-stranded DNA-binding activity. Post-translationally, phosphorylated; hyperphosphorylated in response to genotoxic stress.

It localises to the nucleus. The enzyme catalyses ATP + H2O = ADP + phosphate + H(+). Functionally, DNA-dependent ATPase component of the Fanconi anemia (FA) core complex. Required for the normal activation of the FA pathway, leading to monoubiquitination of the FANCI-FANCD2 complex in response to DNA damage, cellular resistance to DNA cross-linking drugs, and prevention of chromosomal breakage. In complex with CENPS and CENPX, binds double-stranded DNA (dsDNA), fork-structured DNA (fsDNA) and Holliday junction substrates. Its ATP-dependent DNA branch migration activity can process branched DNA structures such as a movable replication fork. This activity is strongly stimulated in the presence of CENPS and CENPX. In complex with FAAP24, efficiently binds to single-strand DNA (ssDNA), splayed-arm DNA, and 3'-flap substrates. In vitro, on its own, strongly binds ssDNA oligomers and weakly fsDNA, but does not bind to dsDNA. The sequence is that of Fanconi anemia group M protein homolog (Fancm) from Mus musculus (Mouse).